Consider the following 496-residue polypeptide: GTPase Der (496 aa).

EngA-type G domains lie at 3–168 (PIIA…VPEK) and 210–383 (IKLA…DCST). GTP-binding positions include 9-16 (GRPNVGKS), 56-60 (DTGGI), 120-123 (NKID), 216-223 (GRPNVGKS), 263-267 (DTAGV), and 328-331 (NKWD). The 85-residue stretch at 384 to 468 (KRINTSLLTR…PIRIQFKESE (85 aa)) folds into the KH-like domain.

This sequence belongs to the TRAFAC class TrmE-Era-EngA-EngB-Septin-like GTPase superfamily. EngA (Der) GTPase family. Associates with the 50S ribosomal subunit.

Its function is as follows. GTPase that plays an essential role in the late steps of ribosome biogenesis. In Hamiltonella defensa subsp. Acyrthosiphon pisum (strain 5AT), this protein is GTPase Der.